Here is a 128-residue protein sequence, read N- to C-terminus: Gas vesicle protein O (128 aa).

The disordered stretch occupies residues 1–49 (MANTPEDTQNTQNDSQNDSQNDSQKDTSARATSARAHQQPQEQPPSPMR). The span at 7-22 (DTQNTQNDSQNDSQND) shows a compositional bias: low complexity. Residues 29–41 (ARATSARAHQQPQ) are compositionally biased toward polar residues.

Belongs to the gas vesicle GvpO family.

Its subcellular location is the gas vesicle. Functionally, a minor component of the gas vesicle. May play a role in transcription and/or RNA stability and in GV assembly. Gas vesicles are hollow, gas filled proteinaceous nanostructures found in some microorganisms. It is not clear what function gas vesicles perform in soil bacteria. This Streptomyces sp. (strain CB03234) protein is Gas vesicle protein O.